A 606-amino-acid polypeptide reads, in one-letter code: Gamma-aminobutyric acid receptor subunit beta (606 aa).

Positions 1 to 44 (MSDSKMDKLARMAPLPRTPLLTIWLAINMALIAQETGHKRIHTV) are cleaved as a signal peptide. The Extracellular portion of the chain corresponds to 45 to 268 (QAATGGGSML…CEIQFVRSMG (224 aa)). Asparagine 58 carries N-linked (GlcNAc...) asparagine glycosylation. Cysteine 185 and cysteine 199 form a disulfide bridge. An N-linked (GlcNAc...) asparagine glycan is attached at asparagine 253. 3 helical membrane-spanning segments follow: residues 269-291 (YYLIQIYIPSGLIVIISWVSFWL), 297-316 (PARVALGVTTVLTMTTLMSS), and 333-356 (YLGTCFVMVFASLLEYATVGYMAK). Topologically, residues 357-568 (RIQMRKQRFM…LGITPSDIDK (212 aa)) are cytoplasmic. Disordered regions lie at residues 376 to 451 (KQQL…VSNR) and 482 to 542 (HDPK…AAVP). Low complexity predominate over residues 381–395 (GANQQQANPNPNANV). The span at 396–425 (GGPGGVGVGPGGPGGPGGGVNVGVGMGMGP) shows a compositional bias: gly residues. Residues 430–443 (GHGHHAHSHGHPHA) show a composition bias toward basic residues. A compositionally biased stretch (gly residues) spans 499-536 (GGRGGPQSHGPGPGQGGGPPGGGGGGGGGGGPPEGGGD). A helical transmembrane segment spans residues 569 to 590 (YSRIVFPVCFVCFNLMYWIIYL).

This sequence belongs to the ligand-gated ion channel (TC 1.A.9) family. Gamma-aminobutyric acid receptor (TC 1.A.9.5) subfamily. In terms of assembly, forms oligomers. Interacts with Nlg4; the interaction mediates Rdl clustering. Interacts with Fbxl4; the interaction mediates Rdl degradation. In terms of tissue distribution, expressed in different parts of the brain: the mushroom bodies (alpha, alpha', beta, beta', gamma lobes and peduncles), the neurons projecting to the columnar-type neuron LC9 optic glomerulus, in interneurons connecting the paired olfactory lobes, antennal lobes, PDF-expressing small and large ventral lateral neurons (LNvs) of the circadian clock and lobula columnar neuron 11 (LC11) (at protein level). Expressed in all major ON pathway medulla neurons (Mi1, Tm3, Mi4, and Mi9) and in OFF pathway neurons (Tm1, Tm2, Tm4, and Tm9).

The protein localises to the cell membrane. Its subcellular location is the postsynaptic cell membrane. It localises to the cell projection. It is found in the dendrite. The protein resides in the axon. Its activity is regulated as follows. Activated by agonist muscimol. Insensitive to zinc, glycine, glutamate, and baclofen, loreclezole, to antagonist bicuculline, glycine-receptor antagonist strychnine, and nonselective GABA and glycine antagonist RU 5135. Insensitive to flunitrazepam, pentobarbitone or pregnane steroids such as 5alpha-pregnan-3alpha-ol-20-one. Inhibited by insecticides picrotoxin (PTX), cyclodiene dieldrin, TBPS and lindane. Inhibited by ivermectin, fipronil and pyrafluprole. With respect to regulation, inhibited by insecticides picrotoxin (PTX). Its function is as follows. Gamma-aminobutyric acid (GABA) receptor voltage channel subunit. GABA, an inhibitory neurotransmitter, mediates neuronal inhibition by binding to the GABA receptor and opening an integral chloride channel. Together with glutamate receptor GluClalpha, plays an important role in the visual response by regulating the activity of ON/OFF-selective neurons. Plays a role in promoting sleep and sleep latency by regulating the activity of peptidergic PDF neurons. In large ventral lateral clock neurons, clustering is mediated by Nlg4 and protein levels undergo daily degradation in response to the circadian clock. In neurons in the mushroom bodies, has a role in odor memory acquisition where it inhibits appetitive and aversive olfactory learning, probably upstream of Adcy1/adenylate cyclase 1 and GTPase activating protein Nf1. In male-specific GABAergic neurons, plays a role in inhibiting male aggressive behavior during courtship. Functionally, gamma-aminobutyric acid (GABA) receptor voltage channel subunit. In Drosophila melanogaster (Fruit fly), this protein is Gamma-aminobutyric acid receptor subunit beta (Rdl).